Here is a 484-residue protein sequence, read N- to C-terminus: Ribonuclease Y (484 aa).

A helical transmembrane segment spans residues 18-38; it reads FFAFLFLIIIAFNLCLFAYLY. A KH domain is found at 166 to 234; that stretch reads SPSFLISESD…LTVRNILMND (69 aa). The HD domain maps to 293–385; that stretch reads VLSHSLETAF…TQIADKLSAA (93 aa).

The protein belongs to the RNase Y family.

Its subcellular location is the cell membrane. Functionally, endoribonuclease that initiates mRNA decay. This chain is Ribonuclease Y, found in Mycoplasma genitalium (strain ATCC 33530 / DSM 19775 / NCTC 10195 / G37) (Mycoplasmoides genitalium).